A 193-amino-acid polypeptide reads, in one-letter code: Transmembrane protein 276 (193 aa).

The signal sequence occupies residues 1–32 (MTPRPGGEWSSALSHLALGAVSLHAALSTAQA). The next 4 helical transmembrane spans lie at 35-55 (GAAAGFLLQALATATMLASGL), 63-83 (AGAWVATVIGLPLLAFDFHWV), 89-109 (SANLLLGGGMVLAVAGDHLGA), and 114-134 (VAGQAVVLVVAVTILIVAVFT).

Its subcellular location is the membrane. The chain is Transmembrane protein 276 from Bos taurus (Bovine).